A 237-amino-acid chain; its full sequence is MSGNLPNTDDVLLQVPDVRCLRSAAETDHPPRILLLYGSNRECSYSRLLTLEAERLLRYFGAETRVFHPTGLPLPDDAPVTHPKVVELQELVEWSEGQVWCSPERHGAMTGVFKSQVDWIPLNSGAIRPTQGKTLALMQVCGGSQSFNAVNQMRILGRWLRMLTIPNQSSVPKAFLEFDDGGRMKPSAYYDRVVDVMEELMKFTLLTRGNSDYLVDRYSERKESAEELSRRVNLQNL.

FMN-binding positions include Ser39–Ser46 and Ser102–Gly107.

This sequence belongs to the ArsH family. In terms of assembly, homotetramer. It depends on FMN as a cofactor.

Has NADPH-dependent FMN reductase activity and high NADPH-dependent ferric reductase activity with highest activity for Fe(3+) as substrate. No activity with NADH, iron trichloride, Cu(2+) or Ag(+). May be involved in cytosolic ferric iron assimilation as an NADPH-dependent ferric reductase in vivo. The sequence is that of NADPH-dependent FMN reductase ArsH from Acidithiobacillus ferrooxidans (strain ATCC 23270 / DSM 14882 / CIP 104768 / NCIMB 8455) (Ferrobacillus ferrooxidans (strain ATCC 23270)).